The sequence spans 471 residues: Putative multidrug resistance protein MdtD (471 aa).

Residues 1-11 (MTDLPDSTRWQ) lie on the Periplasmic side of the membrane. The helical transmembrane segment at 12 to 32 (LWIVAFGFFMQSLDTTIVNTA) threads the bilayer. Residues 33-48 (LPSMAQSLGESPLHMH) lie on the Cytoplasmic side of the membrane. Residues 49 to 69 (MVIVSYVLTVAVMLPASGWLA) traverse the membrane as a helical segment. Residues 70-76 (DKVGVRN) are Periplasmic-facing. The helical transmembrane segment at 77–97 (IFFTAIVLFTLGSLFCALSGT) threads the bilayer. Topologically, residues 98-101 (LNEL) are cytoplasmic. The helical transmembrane segment at 102–124 (LLARALQGVGGAMMVPVGRLTVM) threads the bilayer. Residues 125-137 (KIVPREQYMAAMT) are Periplasmic-facing. A helical membrane pass occupies residues 138–158 (FVTLPGQVGPLLGPALGGLLV). Over 159–164 (EYASWH) the chain is Cytoplasmic. The chain crosses the membrane as a helical span at residues 165-185 (WIFLINIPVGIIGAIATLMLM). The Periplasmic portion of the chain corresponds to 186 to 196 (PNYTMQTRRFD). The helical transmembrane segment at 197-217 (LSGFLLLAVGMAVLTLALDGS) threads the bilayer. The Cytoplasmic portion of the chain corresponds to 218–224 (KGTGLSP). A helical membrane pass occupies residues 225–245 (LAIAGLVAVGVVALVLYLLHA). Residues 246-262 (RNNNRALFSLKLFRTRT) are Periplasmic-facing. The helical transmembrane segment at 263-283 (FSLGLAGSFAGRIGSGMLPFM) threads the bilayer. At 284-285 (TP) the chain is on the cytoplasmic side. Residues 286–306 (VFLQIGLGFSPFHAGLMMIPM) form a helical membrane-spanning segment. Over 307–341 (VLGSMGMKRIVVQVVNRFGYRRVLVATTLGLSLVT) the chain is Periplasmic. A helical transmembrane segment spans residues 342–362 (MLFMTTALLGWYYVLPFVLFL). Over 363–395 (QGMVNSTRFSSMNTLTLKDLPDNLASSGNSLLS) the chain is Cytoplasmic. A helical membrane pass occupies residues 396 to 416 (MIMQLSMSIGVTIAGLLLGLF). Residues 417-430 (GSQHVSVDSGTTQT) lie on the Periplasmic side of the membrane. The helical transmembrane segment at 431–451 (VFMYTWLSMAFIIALPAFIFA) threads the bilayer. Residues 452 to 471 (RVPNDTHQNVAISRRKRSAQ) are Cytoplasmic-facing.

The protein belongs to the major facilitator superfamily. TCR/Tet family.

The protein localises to the cell inner membrane. This is Putative multidrug resistance protein MdtD from Escherichia coli O7:K1 (strain IAI39 / ExPEC).